We begin with the raw amino-acid sequence, 248 residues long: Protein STPG4 (248 aa).

As to quaternary structure, interacts with histone H3. Interacts with histone H4.

It localises to the cytoplasm. The protein resides in the nucleus. Functionally, maternal factor that plays a role in epigenetic chromatin reprogramming during early development of the zygote. Involved in the regulation of gametic DNA demethylation by inducing the conversion of the modified genomic base 5-methylcytosine (5mC) into 5-hydroxymethylcytosine (5hmC). In Homo sapiens (Human), this protein is Protein STPG4.